The following is a 137-amino-acid chain: Ribonuclease VapC18 (137 aa).

In terms of domain architecture, PINc spans cysteine 4 to glutamine 126. The Mg(2+) site is built by aspartate 6 and aspartate 96.

This sequence belongs to the PINc/VapC protein family. Requires Mg(2+) as cofactor.

Toxic component of a type II toxin-antitoxin (TA) system. An RNase. The cognate antitoxin is VapB18. In Mycobacterium tuberculosis (strain ATCC 25618 / H37Rv), this protein is Ribonuclease VapC18.